The primary structure comprises 245 residues: Ribonuclease 3 (245 aa).

An RNase III domain is found at 17 to 146 (FTDKMKSLGL…FVGALYLDQG (130 aa)). Mg(2+) is bound at residue E59. Residue D63 is part of the active site. Residues D132 and E135 each contribute to the Mg(2+) site. The active site involves E135. Residues 172–241 (DFKTQFQEYV…AEQAYKLMKN (70 aa)) form the DRBM domain.

It belongs to the ribonuclease III family. Homodimer. Requires Mg(2+) as cofactor.

It localises to the cytoplasm. The enzyme catalyses Endonucleolytic cleavage to 5'-phosphomonoester.. Functionally, digests double-stranded RNA. Involved in the processing of primary rRNA transcript to yield the immediate precursors to the large and small rRNAs (23S and 16S). Processes some mRNAs, and tRNAs when they are encoded in the rRNA operon. Processes pre-crRNA and tracrRNA of type II CRISPR loci if present in the organism. The protein is Ribonuclease 3 of Staphylococcus epidermidis (strain ATCC 12228 / FDA PCI 1200).